Consider the following 170-residue polypeptide: UPF0201 protein MJ1564 (170 aa).

The segment covering 133-148 (NEDELEEEEEKEDSEE) has biased composition (acidic residues). Residues 133 to 170 (NEDELEEEEEKEDSEEIKEGHKEENNLKIKVIDNSSGD) are disordered. Residues 149 to 163 (IKEGHKEENNLKIKV) show a composition bias toward basic and acidic residues.

Belongs to the UPF0201 family.

In Methanocaldococcus jannaschii (strain ATCC 43067 / DSM 2661 / JAL-1 / JCM 10045 / NBRC 100440) (Methanococcus jannaschii), this protein is UPF0201 protein MJ1564.